The primary structure comprises 356 residues: tRNA N6-adenosine threonylcarbamoyltransferase (356 aa).

Fe cation-binding residues include H110 and H114. Residues 133–137, D166, G179, and N276 contribute to the substrate site; that span reads LVSGG. D304 contributes to the Fe cation binding site.

This sequence belongs to the KAE1 / TsaD family. Fe(2+) serves as cofactor.

Its subcellular location is the cytoplasm. It carries out the reaction L-threonylcarbamoyladenylate + adenosine(37) in tRNA = N(6)-L-threonylcarbamoyladenosine(37) in tRNA + AMP + H(+). Required for the formation of a threonylcarbamoyl group on adenosine at position 37 (t(6)A37) in tRNAs that read codons beginning with adenine. Is involved in the transfer of the threonylcarbamoyl moiety of threonylcarbamoyl-AMP (TC-AMP) to the N6 group of A37, together with TsaE and TsaB. TsaD likely plays a direct catalytic role in this reaction. The chain is tRNA N6-adenosine threonylcarbamoyltransferase from Teredinibacter turnerae (strain ATCC 39867 / T7901).